Here is a 605-residue protein sequence, read N- to C-terminus: Aspartate--tRNA(Asp/Asn) ligase (605 aa).

Residue glutamate 172 participates in L-aspartate binding. The tract at residues glutamine 196 to lysine 199 is aspartate. An L-aspartate-binding site is contributed by arginine 218. ATP-binding positions include arginine 218–glutamate 220 and glutamine 227. Histidine 455 serves as a coordination point for L-aspartate. Glutamate 489 contributes to the ATP binding site. Arginine 496 provides a ligand contact to L-aspartate. Glycine 541–arginine 544 contributes to the ATP binding site.

Belongs to the class-II aminoacyl-tRNA synthetase family. Type 1 subfamily. In terms of assembly, homodimer.

The protein resides in the cytoplasm. The catalysed reaction is tRNA(Asx) + L-aspartate + ATP = L-aspartyl-tRNA(Asx) + AMP + diphosphate. Functionally, aspartyl-tRNA synthetase with relaxed tRNA specificity since it is able to aspartylate not only its cognate tRNA(Asp) but also tRNA(Asn). Reaction proceeds in two steps: L-aspartate is first activated by ATP to form Asp-AMP and then transferred to the acceptor end of tRNA(Asp/Asn). In Ralstonia nicotianae (strain ATCC BAA-1114 / GMI1000) (Ralstonia solanacearum), this protein is Aspartate--tRNA(Asp/Asn) ligase.